The primary structure comprises 405 residues: Arginine biosynthesis bifunctional protein ArgJ (405 aa).

Substrate contacts are provided by T152, K178, T189, E276, N400, and T405. T189 functions as the Nucleophile in the catalytic mechanism.

It belongs to the ArgJ family. As to quaternary structure, heterotetramer of two alpha and two beta chains.

It is found in the cytoplasm. It catalyses the reaction N(2)-acetyl-L-ornithine + L-glutamate = N-acetyl-L-glutamate + L-ornithine. The enzyme catalyses L-glutamate + acetyl-CoA = N-acetyl-L-glutamate + CoA + H(+). Its pathway is amino-acid biosynthesis; L-arginine biosynthesis; L-ornithine and N-acetyl-L-glutamate from L-glutamate and N(2)-acetyl-L-ornithine (cyclic): step 1/1. It functions in the pathway amino-acid biosynthesis; L-arginine biosynthesis; N(2)-acetyl-L-ornithine from L-glutamate: step 1/4. In terms of biological role, catalyzes two activities which are involved in the cyclic version of arginine biosynthesis: the synthesis of N-acetylglutamate from glutamate and acetyl-CoA as the acetyl donor, and of ornithine by transacetylation between N(2)-acetylornithine and glutamate. In Pseudomonas fluorescens (strain Pf0-1), this protein is Arginine biosynthesis bifunctional protein ArgJ.